A 584-amino-acid polypeptide reads, in one-letter code: Methionine--tRNA ligase (584 aa).

A 'HIGH' region motif is present at residues Pro-12–His-22. Zn(2+) contacts are provided by Cys-144, Cys-147, Cys-157, and Cys-160. The 'KMSKS' region signature appears at Gln-334–Ser-338. Thr-337 is an ATP binding site. Residues Glu-541–Leu-563 are disordered.

It belongs to the class-I aminoacyl-tRNA synthetase family. MetG type 1 subfamily. As to quaternary structure, monomer. Zn(2+) serves as cofactor.

The protein resides in the cytoplasm. It carries out the reaction tRNA(Met) + L-methionine + ATP = L-methionyl-tRNA(Met) + AMP + diphosphate. Is required not only for elongation of protein synthesis but also for the initiation of all mRNA translation through initiator tRNA(fMet) aminoacylation. The protein is Methionine--tRNA ligase of Thermomicrobium roseum (strain ATCC 27502 / DSM 5159 / P-2).